Reading from the N-terminus, the 236-residue chain is Purine nucleoside phosphorylase DeoD-type (236 aa).

Residue His-5 coordinates a purine D-ribonucleoside. Phosphate is bound by residues Gly-21, Arg-25, Arg-44, and 88-91; that span reads RVGT. Residues 180–182 and 204–205 contribute to the a purine D-ribonucleoside site; these read EME and SD. Catalysis depends on Asp-205, which acts as the Proton donor.

The protein belongs to the PNP/UDP phosphorylase family. In terms of assembly, homohexamer; trimer of homodimers.

The catalysed reaction is a purine D-ribonucleoside + phosphate = a purine nucleobase + alpha-D-ribose 1-phosphate. It carries out the reaction a purine 2'-deoxy-D-ribonucleoside + phosphate = a purine nucleobase + 2-deoxy-alpha-D-ribose 1-phosphate. Functionally, catalyzes the reversible phosphorolytic breakdown of the N-glycosidic bond in the beta-(deoxy)ribonucleoside molecules, with the formation of the corresponding free purine bases and pentose-1-phosphate. This Shewanella baltica (strain OS223) protein is Purine nucleoside phosphorylase DeoD-type.